Reading from the N-terminus, the 258-residue chain is Terpene cyclase macJ (258 aa).

Transmembrane regions (helical) follow at residues 29–49, 58–78, 83–103, 124–144, 151–171, 181–201, and 220–240; these read VPDGFTAISGILWSISYILMA, YAMPLHCLCLNITWEAVYGFV, LLNQVVFAQWMIVDVVLFYAI, IIVVGCVICLWLHLAIAATFI, VVFMTAWPMQVLINFSSIAQL, SWGIWWTRMLGTIAAACCFFW, and FLLLGSIGSDMVYAAVYVYVQ.

It belongs to the paxB family.

The protein localises to the membrane. The protein operates within secondary metabolite biosynthesis; terpenoid biosynthesis. In terms of biological role, terpene cyclase; part of the gene cluster that mediates the biosynthesis of macrophorins, isoprenoid epoxycyclohexenones containing cyclized drimane moieties. The first step of the pathway is the synthesis of 6-methylsalicylic acid (6-MSA) by the polyketide synthase macA. 6-MSA is then converted to m-cresol by the decarboxylase macB. The cytochrome P450 monooxygenase macC then catalyzes the oxidation of m-cresol to toluquinol. Epoxidation of toluquinol is then performed by the short chain dehydrogenase macD, with the help of macE, and a further prenylation by macG leads to 7-deacetoxyyanuthone A. The next step is the hydroxylation of C-22 of 7-deacetoxyyanuthone A by the cytochrome P450 monooxygenase macH to yield 22-deacetylyanuthone A. O-Mevalon transferase macI then attaches mevalon to the hydroxyl group of 22-deacetylyanuthone A to produce yanuthone E. The terpene cyclase macJ catalyzes the cyclization of 22-deacetylyanuthone A to macrophorin A. MacJ is also able to catalyze cyclization of yanuthone E and 7-deacetoxyyanuthone A to their corresponding macrophorins. The macJ products can be further modified by macH and macJ, as well as by the FAD-dependent monooxygenase macF, to produce additional macrophorins, including 4'-oxomacrophorin A, 4'-oxomacrophorin D and 4'-oxomacrophorin E. The protein is Terpene cyclase macJ of Penicillium terrestre.